Here is a 472-residue protein sequence, read N- to C-terminus: Argininosuccinate lyase (472 aa).

This sequence belongs to the lyase 1 family. Argininosuccinate lyase subfamily.

The protein resides in the cytoplasm. The enzyme catalyses 2-(N(omega)-L-arginino)succinate = fumarate + L-arginine. The protein operates within amino-acid biosynthesis; L-arginine biosynthesis; L-arginine from L-ornithine and carbamoyl phosphate: step 3/3. The protein is Argininosuccinate lyase of Synechococcus sp. (strain CC9605).